The following is a 380-amino-acid chain: Glucose-1-phosphate adenylyltransferase (380 aa).

Alpha-D-glucose 1-phosphate contacts are provided by residues Tyr100, Gly165, 180–181 (EK), and Ser191.

The protein belongs to the bacterial/plant glucose-1-phosphate adenylyltransferase family. Homotetramer.

The enzyme catalyses alpha-D-glucose 1-phosphate + ATP + H(+) = ADP-alpha-D-glucose + diphosphate. It functions in the pathway glycan biosynthesis; glycogen biosynthesis. In terms of biological role, involved in the biosynthesis of ADP-glucose, a building block required for the elongation reactions to produce glycogen. Catalyzes the reaction between ATP and alpha-D-glucose 1-phosphate (G1P) to produce pyrophosphate and ADP-Glc. This Clostridium acetobutylicum (strain ATCC 824 / DSM 792 / JCM 1419 / IAM 19013 / LMG 5710 / NBRC 13948 / NRRL B-527 / VKM B-1787 / 2291 / W) protein is Glucose-1-phosphate adenylyltransferase.